Reading from the N-terminus, the 84-residue chain is U4-theraphotoxin-Hhn1n (84 aa).

Residues 1-22 form the signal peptide; that stretch reads MKVTLIAILTCAAVLVLHTTAA. The propeptide occupies 23–47; that stretch reads EELEESQLMEVGMPDTELAAVDEER. Cystine bridges form between Cys51–Cys65, Cys55–Cys76, and Cys70–Cys81.

It belongs to the neurotoxin 12 (Hwtx-2) family. 02 (Hwtx-2) subfamily. As to expression, expressed by the venom gland.

It is found in the secreted. In terms of biological role, postsynaptic neurotoxin. This Cyriopagopus hainanus (Chinese bird spider) protein is U4-theraphotoxin-Hhn1n.